The primary structure comprises 403 residues: G2/mitotic-specific cyclin-B1 (403 aa).

It belongs to the cyclin family. Cyclin AB subfamily. In terms of assembly, interacts with the CDC2 protein kinase to form a serine/threonine kinase holoenzyme complex also known as maturation promoting factor (MPF). The cyclin subunit imparts substrate specificity to the complex.

Essential for the control of the cell cycle at the G2/M (mitosis) transition. The sequence is that of G2/mitotic-specific cyclin-B1 (ccnb1) from Anguilla japonica (Japanese eel).